A 247-amino-acid polypeptide reads, in one-letter code: Ribosomal RNA large subunit methyltransferase E (247 aa).

Residues Gly-99, Trp-101, Asp-123, Asp-139, and Asp-162 each contribute to the S-adenosyl-L-methionine site. Lys-202 functions as the Proton acceptor in the catalytic mechanism.

It belongs to the class I-like SAM-binding methyltransferase superfamily. RNA methyltransferase RlmE family.

The protein localises to the cytoplasm. The catalysed reaction is uridine(2552) in 23S rRNA + S-adenosyl-L-methionine = 2'-O-methyluridine(2552) in 23S rRNA + S-adenosyl-L-homocysteine + H(+). Specifically methylates the uridine in position 2552 of 23S rRNA at the 2'-O position of the ribose in the fully assembled 50S ribosomal subunit. This Anaplasma phagocytophilum (strain HZ) protein is Ribosomal RNA large subunit methyltransferase E.